We begin with the raw amino-acid sequence, 369 residues long: 3-isopropylmalate dehydrogenase (369 aa).

Position 77–90 (77–90) interacts with NAD(+); it reads GPKYDVLDFSVKPE. The substrate site is built by arginine 97, arginine 107, arginine 135, and aspartate 226. The Mg(2+) site is built by aspartate 226, aspartate 250, and aspartate 254. 289-301 contributes to the NAD(+) binding site; the sequence is GSAPDIAGQGKAN.

Belongs to the isocitrate and isopropylmalate dehydrogenases family. LeuB type 1 subfamily. In terms of assembly, homodimer. It depends on Mg(2+) as a cofactor. Requires Mn(2+) as cofactor.

The protein resides in the cytoplasm. It carries out the reaction (2R,3S)-3-isopropylmalate + NAD(+) = 4-methyl-2-oxopentanoate + CO2 + NADH. It functions in the pathway amino-acid biosynthesis; L-leucine biosynthesis; L-leucine from 3-methyl-2-oxobutanoate: step 3/4. Catalyzes the oxidation of 3-carboxy-2-hydroxy-4-methylpentanoate (3-isopropylmalate) to 3-carboxy-4-methyl-2-oxopentanoate. The product decarboxylates to 4-methyl-2 oxopentanoate. The protein is 3-isopropylmalate dehydrogenase of Cereibacter sphaeroides (strain ATCC 17023 / DSM 158 / JCM 6121 / CCUG 31486 / LMG 2827 / NBRC 12203 / NCIMB 8253 / ATH 2.4.1.) (Rhodobacter sphaeroides).